The following is a 237-amino-acid chain: Type II secretion system protein J (237 aa).

The propeptide at 1 to 6 (MRLQRG) is leader sequence. The residue at position 7 (Phe7) is an N-methylphenylalanine. A helical membrane pass occupies residues 7 to 29 (FTLLELLIAIAIFALLALATYRM). The interval 203-237 (PLKQDQPQGQPGGENGENGEGGVPQPPEGMPGAPE) is disordered. The segment covering 212–224 (QPGGENGENGEGG) has biased composition (gly residues). Positions 226–237 (PQPPEGMPGAPE) are enriched in pro residues.

The protein belongs to the GSP J family. In terms of assembly, type II secretion is composed of four main components: the outer membrane complex, the inner membrane complex, the cytoplasmic secretion ATPase and the periplasm-spanning pseudopilus. Forms the tip of the type II pseudopilus by interacting with XcpV, XcpU and XcpX. Interacts with core component XcpT. In terms of processing, cleaved by prepilin peptidase. Methylated by prepilin peptidase at the amino group of the N-terminal phenylalanine once the leader sequence is cleaved by prepilin peptidase.

It is found in the cell inner membrane. In terms of biological role, component of the type II secretion system required for the energy-dependent secretion of extracellular factors such as proteases and toxins from the periplasm. Part of the pseudopilus tip complex that is critical for the recognition and binding of secretion substrates. Type II pseudopilus confers increased bacterial adhesive capabilities. The protein is Type II secretion system protein J (xcpW) of Pseudomonas aeruginosa (strain ATCC 15692 / DSM 22644 / CIP 104116 / JCM 14847 / LMG 12228 / 1C / PRS 101 / PAO1).